Here is a 436-residue protein sequence, read N- to C-terminus: Xylose isomerase (436 aa).

Active-site residues include histidine 100 and aspartate 103. Positions 231, 267, 270, 295, 306, 308, and 338 each coordinate Mg(2+).

This sequence belongs to the xylose isomerase family. As to quaternary structure, homotetramer. Requires Mg(2+) as cofactor.

It is found in the cytoplasm. It catalyses the reaction alpha-D-xylose = alpha-D-xylulofuranose. This is Xylose isomerase from Ruegeria sp. (strain TM1040) (Silicibacter sp.).